Consider the following 404-residue polypeptide: RING-H2 finger protein ATL11 (404 aa).

Residues 1–36 (MNPKGRTNLNRSIIGGHDHGSILQLLLFLLLLSSHG) form the signal peptide. A helical transmembrane segment spans residues 64–84 (AILMIVLVSVFFFLGFFSVYI). An RING-type; atypical zinc finger spans residues 144 to 186 (CSVCLNEFEDDETLRLIPKCCHVFHPGCIDAWLRSHTTCPLCR). Disordered stretches follow at residues 339 to 361 (PYRT…VRAS) and 385 to 404 (VGEN…SNTV).

It belongs to the RING-type zinc finger family. ATL subfamily.

Its subcellular location is the membrane. The catalysed reaction is S-ubiquitinyl-[E2 ubiquitin-conjugating enzyme]-L-cysteine + [acceptor protein]-L-lysine = [E2 ubiquitin-conjugating enzyme]-L-cysteine + N(6)-ubiquitinyl-[acceptor protein]-L-lysine.. Its pathway is protein modification; protein ubiquitination. The polypeptide is RING-H2 finger protein ATL11 (ATL11) (Arabidopsis thaliana (Mouse-ear cress)).